Here is a 342-residue protein sequence, read N- to C-terminus: Biotin synthase (342 aa).

In terms of domain architecture, Radical SAM core spans 38 to 262; that stretch reads GQVQISTLLS…MMPTSYVRLS (225 aa). 3 residues coordinate [4Fe-4S] cluster: cysteine 53, cysteine 57, and cysteine 60. Cysteine 97, cysteine 128, cysteine 188, and arginine 260 together coordinate [2Fe-2S] cluster.

Belongs to the radical SAM superfamily. Biotin synthase family. As to quaternary structure, homodimer. [4Fe-4S] cluster is required as a cofactor. The cofactor is [2Fe-2S] cluster.

The enzyme catalyses (4R,5S)-dethiobiotin + (sulfur carrier)-SH + 2 reduced [2Fe-2S]-[ferredoxin] + 2 S-adenosyl-L-methionine = (sulfur carrier)-H + biotin + 2 5'-deoxyadenosine + 2 L-methionine + 2 oxidized [2Fe-2S]-[ferredoxin]. Its pathway is cofactor biosynthesis; biotin biosynthesis; biotin from 7,8-diaminononanoate: step 2/2. In terms of biological role, catalyzes the conversion of dethiobiotin (DTB) to biotin by the insertion of a sulfur atom into dethiobiotin via a radical-based mechanism. The polypeptide is Biotin synthase (Baumannia cicadellinicola subsp. Homalodisca coagulata).